Reading from the N-terminus, the 856-residue chain is Inactive rhomboid protein 1 (856 aa).

A disordered region spans residues 1-21 (MGEARRDSSSSLQHKKPPWLK). At 1 to 412 (MGEARRDSSS…HRPFFTYWLT (412 aa)) the chain is on the cytoplasmic side. 2 positions are modified to phosphoserine: serine 76 and serine 176. 2 positions are modified to phosphothreonine: threonine 180 and threonine 183. Serine 391 is modified (phosphoserine). The helical transmembrane segment at 413 to 433 (FVHSLVTILAVCIYGVAPVGF) threads the bilayer. Over 434-656 (SQHETVDSVL…NPEVPDQFYR (223 aa)) the chain is Lumenal. Asparagine 584 is a glycosylation site (N-linked (GlcNAc...) asparagine). The chain crosses the membrane as a helical span at residues 657 to 677 (LWLSLFLHAGVLHCLVSVCFQ). At 678 to 692 (MTVLRDLEKLAGWHR) the chain is on the cytoplasmic side. The helical transmembrane segment at 693–713 (IAIIYLLSGVTGNLASAIFLP) threads the bilayer. At 714 to 715 (YR) the chain is on the lumenal side. A helical transmembrane segment spans residues 716–736 (AEVGPAGSQFGILACLFVELF). The Cytoplasmic portion of the chain corresponds to 737-747 (QSWQILARPWR). Residues 748-768 (AFFKLLAVVLFLFTFGLLPWI) traverse the membrane as a helical segment. The Lumenal portion of the chain corresponds to 769–773 (DNFAH). A helical transmembrane segment spans residues 774-794 (ISGFISGLFLSFAFLPYISFG). The Cytoplasmic segment spans residues 795 to 804 (KFDLYRKRCQ). A helical transmembrane segment spans residues 805–825 (IIVFQLVFLGLLAGLVVLFYF). Residues 826–856 (YPVRCEWCEFLTCIPFTDKFCEKYELDAQLH) lie on the Lumenal side of the membrane.

It belongs to the peptidase S54 family. Homodimer, or homooligomer. Interacts with TGFA and HBEGF. Interacts with EGF; may retain EGF in the endoplasmic reticulum and regulates its degradation through the endoplasmic reticulum-associated degradation (ERAD). Interacts (via cytoplasmic N-terminus) with FRMD8/iTAP; this interaction leads to mutual protein stabilization. Interacts with ADAM17/TACE.

The protein localises to the endoplasmic reticulum membrane. The protein resides in the golgi apparatus membrane. Its function is as follows. Regulates ADAM17 protease, a sheddase of the epidermal growth factor (EGF) receptor ligands and TNF, thereby plays a role in sleep, cell survival, proliferation, migration and inflammation. Does not exhibit any protease activity on its own. The protein is Inactive rhomboid protein 1 (RHBDF1) of Bos taurus (Bovine).